An 86-amino-acid chain; its full sequence is UPF0437 protein Ava_4254 (86 aa).

It belongs to the UPF0437 family.

The chain is UPF0437 protein Ava_4254 from Trichormus variabilis (strain ATCC 29413 / PCC 7937) (Anabaena variabilis).